The sequence spans 134 residues: uncharacterized protein (134 aa).

To E.coli YbcV and YdfO.

This is an uncharacterized protein from Escherichia coli (strain K12).